A 139-amino-acid chain; its full sequence is Transmembrane protein 250 (139 aa).

2 helical membrane-spanning segments follow: residues 56–76 (FLLYFSCSLFTAALWGALAAL) and 116–136 (VYGIHVTMLLVGGLGWCFMVF).

As to quaternary structure, (Microbial infection) Interacts with herpes simplex virus 1/HHV-1 protein CVC2/UL25.

It localises to the membrane. It is found in the nucleus. Its subcellular location is the cytoplasm. In terms of biological role, may play a role in cell proliferation by promoting progression into S phase. (Microbial infection) Promotes human herpes simplex virus 1/HHV-1 proliferation. In Homo sapiens (Human), this protein is Transmembrane protein 250.